We begin with the raw amino-acid sequence, 594 residues long: Probable glucose transporter rco-3 (594 aa).

Over 1 to 13 (MAIFAMGWQKPDN) the chain is Cytoplasmic. Residues 14 to 34 (VAGSSAPAIMVGLFVATGGLL) traverse the membrane as a helical segment. Over 35-73 (LGYDTGTINGILAMKSFKDHFSTGYIDGNGQPGIYPKES) the chain is Extracellular. Residues 74–94 (ALIVAMLSAGTAIGALLAAPL) form a helical membrane-spanning segment. The Cytoplasmic segment spans residues 95–103 (GDHYGRRRS). A helical transmembrane segment spans residues 104-124 (LIGAIGIFVIGAILQVCAYNI). Residue Asp125 is a topological domain, extracellular. The chain crosses the membrane as a helical span at residues 126-146 (LLVAGRTVAGVGIGIVSVLVP). Residues 147–159 (LYQSEMAPKWIRG) lie on the Cytoplasmic side of the membrane. The helical transmembrane segment at 160–180 (TLVCTYQLSITMGLLAAAVVN) threads the bilayer. Topologically, residues 181 to 193 (ILTYKLKTAAAYR) are extracellular. The helical transmembrane segment at 194 to 214 (VPIGLQLTWACVLALGLTVLP) threads the bilayer. Residues 215 to 293 (ETPRYLIKRG…TGCCLQMLQQ (79 aa)) are Cytoplasmic-facing. Residues 294–314 (LTGVNFIMYYGTTFFNNAGVG) traverse the membrane as a helical segment. Topologically, residues 315-318 (NPFK) are extracellular. A helical transmembrane segment spans residues 319 to 339 (ISLIMQVINTASTIPGLFVVE). The Cytoplasmic segment spans residues 340-345 (SWGRRR). Residues 346–366 (LLMVGAIGMAICQLLIAAFAT) traverse the membrane as a helical segment. At 367-378 (ASGSNNLSAQNK) the chain is on the extracellular side. Asn372 is a glycosylation site (N-linked (GlcNAc...) asparagine). The chain crosses the membrane as a helical span at residues 379–403 (VLITFVAIYIFFFAASWGPVVWVVT). The Cytoplasmic portion of the chain corresponds to 404–415 (SEIYPLKVRAKS). The helical transmembrane segment at 416–436 (MSITTASNWFLNFGIAYGTPY) threads the bilayer. Over 437-454 (MQTNSAASDESSIDLGSK) the chain is Extracellular. The chain crosses the membrane as a helical span at residues 455-475 (VFFVWGAFCIVAVGFVWCMVY). The Cytoplasmic portion of the chain corresponds to 476-594 (ETSKISLEQI…ASLGNIDLSY (119 aa)). The interval 512–594 (DLGFSDGGIP…ASLGNIDLSY (83 aa)) is disordered. Low complexity predominate over residues 524-576 (QQLQQQPQQPQQQQQQHHQQQQHQLQVDLQQSQSRTSNSSTSQTDTGGSNNTG).

Belongs to the major facilitator superfamily. Sugar transporter (TC 2.A.1.1) family.

It is found in the membrane. Its function is as follows. Probable glucose transporter. Involved in sugar transport, carbon catabolite repression, and initiation of conidiophore development. The polypeptide is Probable glucose transporter rco-3 (rco-3) (Neurospora crassa (strain ATCC 24698 / 74-OR23-1A / CBS 708.71 / DSM 1257 / FGSC 987)).